The following is a 236-amino-acid chain: Dense granule protein 7 (236 aa).

Residues 1–26 (MARHAIFSALCVLGLVAAALPQFATA) form the signal peptide. The tract at residues 45–106 (DGQAPVDSLR…EVHFRKRGVR (62 aa)) is disordered. Polar residues predominate over residues 70–80 (TTSMDKASVES). The required for dimerization, interactions with liposomes and liposome tubulation stretch occupies residues 147–236 (AVGMGASYFA…SGEDGEDARQ (90 aa)). A helical membrane pass occupies residues 181–201 (VGTVLGFAALAAAAAFLGMGL). The disordered stretch occupies residues 208–236 (FSPRKNRSRQPALEQEVPESGEDGEDARQ). The N-linked (GlcNAc...) asparagine glycan is linked to Asn213. The span at 223-236 (EVPESGEDGEDARQ) shows a compositional bias: acidic residues.

This sequence belongs to the Gra7 family. As to quaternary structure, homodimer. Can form higher order homooligomers in a lipid-stimulated manner. Component of a complex at least composed of ROP18, GRA7 and ROP2. Interacts with ROP5. Interacts with ROP18 in the absence of ROP5. Interacts with mouse IRGA6/IIGP1 in GTP-dependent manner; the interaction results in faster turnover of the GTP-activated IRGA6/IIGP1 oligomer. Interacts with mouse TRAF6 (via N-terminal RING domain); the interaction plays a role in GRA7-induced pro-inflammatory cytokine production in mouse macrophages.

It localises to the secreted. Its subcellular location is the parasitophorous vacuole lumen. It is found in the parasitophorous vacuole membrane. The protein resides in the cytoplasm. The protein localises to the host cytoplasm. It localises to the cytoplasmic vesicle. Its subcellular location is the secretory vesicle. Binds lipid bilayers, sequesters host endocytic organelles in the parasitophorous vacuole space, and causes their deformation and remodeling. Plays a role in nutrient acquisition from the host. In complex with ROP18, targets immunity-related GTPases (IRGs) to prevent IRG-mediated parasite killing by mouse cells. Important component within a kinase complex, contributing to phosphorylation of mouse IRGA6/IIGP1, an immunity-related GTPase that protects mice from infection by certain intracellular pathogens, by Toxoplasma gondii ROP5 and ROP18. Induces pro-inflammatory cytokine production in host macrophages. Activates host pro-inflammatory signaling pathways in a MyD88-dependent manner. Triggers generation of reactive oxygen species (ROS) in host cells. Activates MAPK pathway in host cells. Activates host NF-kappa-B signaling pathway by interacting with TRAF6 and modulating the 'Lys-63'-linked polyubiquitination of TRAF6. This Toxoplasma gondii protein is Dense granule protein 7.